We begin with the raw amino-acid sequence, 251 residues long: DNA polymerase sliding clamp 2 (251 aa).

Belongs to the PCNA family. Heterotrimer. The subunits circularize to form a toroid; DNA passes through its center. Replication factor C (RFC) is required to load the toroid on the DNA.

Sliding clamp subunit that acts as a moving platform for DNA processing. Responsible for tethering the catalytic subunit of DNA polymerase and other proteins to DNA during high-speed replication. The protein is DNA polymerase sliding clamp 2 of Aeropyrum pernix (strain ATCC 700893 / DSM 11879 / JCM 9820 / NBRC 100138 / K1).